Reading from the N-terminus, the 318-residue chain is Bis(5'-nucleosyl)-tetraphosphatase, symmetrical (318 aa).

The interval 269-318 is disordered; the sequence is PGREVTGPAPVARAPRRPRERLGRQRSRGNRGNAGNTAVPAKPPVDTPQD. Positions 282-297 are enriched in basic residues; sequence APRRPRERLGRQRSRG. The span at 309–318 shows a compositional bias: pro residues; it reads AKPPVDTPQD.

The protein belongs to the Ap4A hydrolase family.

The enzyme catalyses P(1),P(4)-bis(5'-adenosyl) tetraphosphate + H2O = 2 ADP + 2 H(+). In terms of biological role, hydrolyzes diadenosine 5',5'''-P1,P4-tetraphosphate to yield ADP. The sequence is that of Bis(5'-nucleosyl)-tetraphosphatase, symmetrical from Xanthomonas oryzae pv. oryzae (strain MAFF 311018).